Consider the following 143-residue polypeptide: D-aminoacyl-tRNA deacylase (143 aa).

Positions 135–136 match the Gly-cisPro motif, important for rejection of L-amino acids motif; that stretch reads GP.

It belongs to the DTD family. As to quaternary structure, homodimer.

It is found in the cytoplasm. The enzyme catalyses glycyl-tRNA(Ala) + H2O = tRNA(Ala) + glycine + H(+). The catalysed reaction is a D-aminoacyl-tRNA + H2O = a tRNA + a D-alpha-amino acid + H(+). Its function is as follows. An aminoacyl-tRNA editing enzyme that deacylates mischarged D-aminoacyl-tRNAs. Also deacylates mischarged glycyl-tRNA(Ala), protecting cells against glycine mischarging by AlaRS. Acts via tRNA-based rather than protein-based catalysis; rejects L-amino acids rather than detecting D-amino acids in the active site. By recycling D-aminoacyl-tRNA to D-amino acids and free tRNA molecules, this enzyme counteracts the toxicity associated with the formation of D-aminoacyl-tRNA entities in vivo and helps enforce protein L-homochirality. The sequence is that of D-aminoacyl-tRNA deacylase from Mycolicibacterium smegmatis (strain ATCC 700084 / mc(2)155) (Mycobacterium smegmatis).